Here is an 841-residue protein sequence, read N- to C-terminus: Protein translocase subunit SecA (841 aa).

Residues glutamine 85, 103–107 (GEGKT), and aspartate 492 contribute to the ATP site. Positions 790 to 814 (IQGQTTAHQPKEGDEEKQAKKKPVR) are disordered. The segment covering 798 to 807 (QPKEGDEEKQ) has biased composition (basic and acidic residues). Zn(2+) contacts are provided by cysteine 825, cysteine 827, cysteine 836, and cysteine 837.

It belongs to the SecA family. In terms of assembly, monomer and homodimer. Part of the essential Sec protein translocation apparatus which comprises SecA, SecYEG and auxiliary proteins SecDF. Other proteins may also be involved. It depends on Zn(2+) as a cofactor.

The protein resides in the cell membrane. It is found in the cytoplasm. It catalyses the reaction ATP + H2O + cellular proteinSide 1 = ADP + phosphate + cellular proteinSide 2.. Its function is as follows. Part of the Sec protein translocase complex. Interacts with the SecYEG preprotein conducting channel. Has a central role in coupling the hydrolysis of ATP to the transfer of proteins into and across the cell membrane, serving as an ATP-driven molecular motor driving the stepwise translocation of polypeptide chains across the membrane. In Bacillus licheniformis (strain ATCC 14580 / DSM 13 / JCM 2505 / CCUG 7422 / NBRC 12200 / NCIMB 9375 / NCTC 10341 / NRRL NRS-1264 / Gibson 46), this protein is Protein translocase subunit SecA.